Consider the following 413-residue polypeptide: MKFLILNAGSSSQKSCLYELTGDRLPETIPEPLWEAFIDWTVLANQGRLTVETAGQKQVIILETGDRQQGIARMLDTLVTGDDAVLKSLAEIDLVGHRVVHGGTDHAEATLITPEVQQAIADLIPLAPAHNPAHLEGIEAISALLVLGEVPQIAVFDTAFHRTIPTPAAEYPIPQAWTNLGIRRYGFHGTSHKYCAQKTAEILGKPLADLKLITCHIGNGASLTAIKNGVSIDTTMGFTPLEGLMMGARSGSIDPAILLFLQETQGLTPAEINTTLNKKSGLLGVSGLSADLRTILQAKAEGNEQAQLAYVMYIHRFRSCLGQMIASLEGLDTLVFTAGVGENAATVRADVCQAFEFLGLKLDPELNNRSPRDTVISHSDSLVTVLIVHTEEDWAIAQDCWHWWHSQGQRKQS.

Asn7 is a binding site for Mg(2+). An ATP-binding site is contributed by Lys14. Position 98 (Arg98) interacts with substrate. Catalysis depends on Asp157, which acts as the Proton donor/acceptor. Residues 216–220, 291–293, and 339–343 each bind ATP; these read HIGNG, DLR, and GVGEN. Glu392 is a binding site for Mg(2+).

It belongs to the acetokinase family. Homodimer. Mg(2+) serves as cofactor. Requires Mn(2+) as cofactor.

It localises to the cytoplasm. It carries out the reaction acetate + ATP = acetyl phosphate + ADP. It functions in the pathway metabolic intermediate biosynthesis; acetyl-CoA biosynthesis; acetyl-CoA from acetate: step 1/2. Catalyzes the formation of acetyl phosphate from acetate and ATP. Can also catalyze the reverse reaction. This is Acetate kinase from Synechocystis sp. (strain ATCC 27184 / PCC 6803 / Kazusa).